The chain runs to 116 residues: Putative pterin-4-alpha-carbinolamine dehydratase (116 aa).

The protein belongs to the pterin-4-alpha-carbinolamine dehydratase family.

The enzyme catalyses (4aS,6R)-4a-hydroxy-L-erythro-5,6,7,8-tetrahydrobiopterin = (6R)-L-erythro-6,7-dihydrobiopterin + H2O. This Stenotrophomonas maltophilia (strain R551-3) protein is Putative pterin-4-alpha-carbinolamine dehydratase.